Consider the following 362-residue polypeptide: 3-dehydroquinate synthase (362 aa).

Residues 71 to 76, 105 to 109, 129 to 130, Lys-142, Lys-151, and 169 to 172 contribute to the NAD(+) site; these read DGEQYK, GVIGD, TT, and CLKT. Zn(2+) contacts are provided by Glu-184, His-247, and His-264.

The protein belongs to the sugar phosphate cyclases superfamily. Dehydroquinate synthase family. Requires NAD(+) as cofactor. The cofactor is Co(2+). Zn(2+) is required as a cofactor.

The protein resides in the cytoplasm. The catalysed reaction is 7-phospho-2-dehydro-3-deoxy-D-arabino-heptonate = 3-dehydroquinate + phosphate. Its pathway is metabolic intermediate biosynthesis; chorismate biosynthesis; chorismate from D-erythrose 4-phosphate and phosphoenolpyruvate: step 2/7. In terms of biological role, catalyzes the conversion of 3-deoxy-D-arabino-heptulosonate 7-phosphate (DAHP) to dehydroquinate (DHQ). This Salmonella typhi protein is 3-dehydroquinate synthase.